We begin with the raw amino-acid sequence, 491 residues long: Chondroitin proteoglycan 2 (491 aa).

The N-terminal stretch at 1–18 (MKTIVALGLLALATAASG) is a signal peptide. Residues 21 to 78 (LQDCTNALDGLYAIGNCESQFLTCSGGIARIMDCPADLIYNEPLLICDWRHNVVGCEG) form the Chitin-binding type-2 1 domain. Cysteines 54 and 67 form a disulfide. Residues 80–126 (GEASGEQSGEGSGEASGEGSGEASGEGSGEASGEGSGSGEGSGEENN) form a disordered region. Gly residues predominate over residues 87–120 (SGEGSGEASGEGSGEASGEGSGEASGEGSGSGEG). The Chitin-binding type-2 2 domain occupies 125-182 (NNVCEGLEDGAYSSGGCTTYYFFCTDNTARFLSCPTPLFYDVATQKCAWKALVEECNG). A disulfide bridge connects residues cysteine 158 and cysteine 171. The tract at residues 187-217 (DGSGETSGEGSGEASGENSGENSGEGSGEFE) is disordered. O-linked (Xyl...) (chondroitin sulfate) serine glycosylation is found at serine 197 and serine 201. A compositionally biased stretch (low complexity) spans 200 to 210 (ASGENSGENSG). Chitin-binding type-2 domains are found at residues 217 to 274 (EPTC…ECHG), 279 to 334 (APVC…ECQE), 367 to 423 (ENEC…KCLI), and 436 to 491 (PFDC…LQCH). 2 disulfides stabilise this stretch: cysteine 250–cysteine 263 and cysteine 310–cysteine 323. Positions 336-367 (SGEESSGEASGEQSGEGSGEASGEASGEASGE) are disordered. Over residues 356–367 (ASGEASGEASGE) the composition is skewed to low complexity. Residues cysteine 399 and cysteine 412 are joined by a disulfide bond. An N-linked (GlcNAc...) asparagine glycan is attached at asparagine 464. Cysteine 467 and cysteine 481 form a disulfide bridge.

Functionally, required for polar body extrusion during cytokinesis in embryo development. Affects cortical granule size. Shown to have roles in meiotic chromosome segregation, osmotic barrier function and polarization in conjunction with cpg-2. Binds chitin. This chain is Chondroitin proteoglycan 2, found in Caenorhabditis briggsae.